The sequence spans 108 residues: Glutaredoxin-1 (108 aa).

The Glutaredoxin domain occupies glutamate 3–arginine 106. A disulfide bridge links cysteine 23 with cysteine 26.

The protein belongs to the glutaredoxin family.

It localises to the virion. Displays thioltransferase and dehydroascorbate reductase activities. This is Glutaredoxin-1 (OPG075) from Variola virus (isolate Human/India/Ind3/1967) (VARV).